The following is a 194-amino-acid chain: Ion-translocating oxidoreductase complex subunit A (194 aa).

6 helical membrane-spanning segments follow: residues 5 to 25 (VLIL…FLGL), 47 to 67 (FVLT…LVPF), 72 to 92 (LRTI…EMFV), 102 to 122 (VLGV…VALL), 135 to 155 (LTYG…FAAM), and 172 to 192 (SIGL…SGLI).

Belongs to the NqrDE/RnfAE family. As to quaternary structure, the complex is composed of six subunits: RnfA, RnfB, RnfC, RnfD, RnfE and RnfG.

It localises to the cell inner membrane. In terms of biological role, part of a membrane-bound complex that couples electron transfer with translocation of ions across the membrane. This chain is Ion-translocating oxidoreductase complex subunit A, found in Alcanivorax borkumensis (strain ATCC 700651 / DSM 11573 / NCIMB 13689 / SK2).